Consider the following 496-residue polypeptide: Guanosine-5'-triphosphate,3'-diphosphate pyrophosphatase (496 aa).

Belongs to the GppA/Ppx family. GppA subfamily.

It carries out the reaction guanosine 3'-diphosphate 5'-triphosphate + H2O = guanosine 3',5'-bis(diphosphate) + phosphate + H(+). Its pathway is purine metabolism; ppGpp biosynthesis; ppGpp from GTP: step 2/2. Its function is as follows. Catalyzes the conversion of pppGpp to ppGpp. Guanosine pentaphosphate (pppGpp) is a cytoplasmic signaling molecule which together with ppGpp controls the 'stringent response', an adaptive process that allows bacteria to respond to amino acid starvation, resulting in the coordinated regulation of numerous cellular activities. In Aeromonas hydrophila subsp. hydrophila (strain ATCC 7966 / DSM 30187 / BCRC 13018 / CCUG 14551 / JCM 1027 / KCTC 2358 / NCIMB 9240 / NCTC 8049), this protein is Guanosine-5'-triphosphate,3'-diphosphate pyrophosphatase.